The primary structure comprises 283 residues: Protein canopy homolog 3 (283 aa).

The N-terminal stretch at 1–35 (MEPLPEPTSRPRLRPRPRCLLLLPLLLLLLLLLPA) is a signal peptide. One can recognise a Saposin B-type domain in the interval 55-276 (SKCEVCKYVA…EGIQKASPLT (222 aa)). N161 carries N-linked (GlcNAc...) asparagine glycosylation. A coiled-coil region spans residues 161-187 (NETSAEVADLKKQCDVLVEEFEEVIED). A disordered region spans residues 223–283 (KGDTAALGGK…PLTHSPPDEL (61 aa)).

This sequence belongs to the canopy family. Interacts with HSP90B1; this interaction is disrupted in the presence of ATP. Interacts with TLR1, TLR2, TLR4 and TLR9.

The protein localises to the endoplasmic reticulum. Its function is as follows. Toll-like receptor (TLR)-specific co-chaperone for HSP90B1. Required for proper TLR folding, except that of TLR3, and hence controls TLR exit from the endoplasmic reticulum. Consequently, required for both innate and adaptive immune responses. This is Protein canopy homolog 3 (CNPY3) from Sus scrofa (Pig).